Consider the following 48-residue polypeptide: Cytochrome b559 subunit beta (48 aa).

The chain crosses the membrane as a helical span at residues 23-39 (WLAVHALAIPSVFFLGS). Residue His27 coordinates heme.

It belongs to the PsbE/PsbF family. Heterodimer of an alpha subunit and a beta subunit. PSII is composed of 1 copy each of membrane proteins PsbA, PsbB, PsbC, PsbD, PsbE, PsbF, PsbH, PsbI, PsbJ, PsbK, PsbL, PsbM, PsbT, PsbX, PsbY, Psb30/Ycf12, peripheral proteins PsbO, CyanoQ (PsbQ), PsbU, PsbV and a large number of cofactors. It forms dimeric complexes. Requires heme b as cofactor.

The protein resides in the cellular thylakoid membrane. This b-type cytochrome is tightly associated with the reaction center of photosystem II (PSII). PSII is a light-driven water:plastoquinone oxidoreductase that uses light energy to abstract electrons from H(2)O, generating O(2) and a proton gradient subsequently used for ATP formation. It consists of a core antenna complex that captures photons, and an electron transfer chain that converts photonic excitation into a charge separation. This is Cytochrome b559 subunit beta from Prochlorococcus marinus (strain MIT 9301).